Here is a 275-residue protein sequence, read N- to C-terminus: 3-methyl-2-oxobutanoate hydroxymethyltransferase (275 aa).

Positions 49 and 88 each coordinate Mg(2+). Residues 49–50 (DS), Asp-88, and Lys-118 each bind 3-methyl-2-oxobutanoate. Glu-120 contacts Mg(2+). Glu-187 (proton acceptor) is an active-site residue.

This sequence belongs to the PanB family. As to quaternary structure, homodecamer; pentamer of dimers. Mg(2+) serves as cofactor.

Its subcellular location is the cytoplasm. It catalyses the reaction 3-methyl-2-oxobutanoate + (6R)-5,10-methylene-5,6,7,8-tetrahydrofolate + H2O = 2-dehydropantoate + (6S)-5,6,7,8-tetrahydrofolate. Its pathway is cofactor biosynthesis; (R)-pantothenate biosynthesis; (R)-pantoate from 3-methyl-2-oxobutanoate: step 1/2. Its function is as follows. Catalyzes the reversible reaction in which hydroxymethyl group from 5,10-methylenetetrahydrofolate is transferred onto alpha-ketoisovalerate to form ketopantoate. This Rhodospirillum centenum (strain ATCC 51521 / SW) protein is 3-methyl-2-oxobutanoate hydroxymethyltransferase.